The chain runs to 117 residues: MTVNIYDNANEMANILTETQQYIAWQNAFNAIQNDTDSKALFGEFQEIQMAVQQMMQSQQQPKPEQEKEWDAVAAKVQKDEKINALMEAEQALNTLLTELNDIVTKPVAEAYSKLQK.

Belongs to the UPF0342 family.

The polypeptide is UPF0342 protein LEUM_1212 (Leuconostoc mesenteroides subsp. mesenteroides (strain ATCC 8293 / DSM 20343 / BCRC 11652 / CCM 1803 / JCM 6124 / NCDO 523 / NBRC 100496 / NCIMB 8023 / NCTC 12954 / NRRL B-1118 / 37Y)).